A 133-amino-acid chain; its full sequence is Small ribosomal subunit protein eS24z (133 aa).

Residues 104-133 (KSRKQIKERKNRAKKIRGVKKTKAGDAKKK) are disordered. The span at 109 to 125 (IKERKNRAKKIRGVKKT) shows a compositional bias: basic residues.

The protein belongs to the eukaryotic ribosomal protein eS24 family.

The chain is Small ribosomal subunit protein eS24z (RPS24A) from Arabidopsis thaliana (Mouse-ear cress).